Consider the following 437-residue polypeptide: Aspartic proteinase nepenthesin-1 (437 aa).

A signal peptide spans 1–24 (MASSLYSFLLALSIVYIFVAPTHS). A propeptide spans 25–78 (TSRTALNHRHEAKVTGFQIMLEHVDSGKNLTKFQLLERAIERGSRRLQRLEAML) (activation peptide). Asn53 and Asn98 each carry an N-linked (GlcNAc...) asparagine glycan. The 336-residue stretch at 95-430 (YLMNLSIGTP…DTGNSVVSFA (336 aa)) folds into the Peptidase A1 domain. Asp113 is an active-site residue. 6 disulfide bridges follow: Cys123/Cys126, Cys129/Cys203, Cys150/Cys168, Cys155/Cys163, Cys240/Cys434, and Cys354/Cys395. Asn131 carries an N-linked (GlcNAc...) asparagine glycan. 3 N-linked (GlcNAc...) asparagine glycosylation sites follow: Asn198, Asn267, and Asn307. The active site involves Asp315. Residue Asn345 is glycosylated (N-linked (GlcNAc...) asparagine).

It belongs to the peptidase A1 family.

It localises to the secreted. It carries out the reaction Similar to pepsin, but also cleaves on either side of Asp and at Lys-|-Arg.. Inhibited by pepstatin and by diazoacetyl-D,L-norleucine methyl ester (DAN) in the presence of Cu(2+) ions. In terms of biological role, extracellular proteinase found in the pitcher fluid of carnivorous plants. Digest prey for nitrogen uptake. The chain is Aspartic proteinase nepenthesin-1 (nep1) from Nepenthes gracilis (Slender pitcher plant).